A 189-amino-acid chain; its full sequence is UPF0301 protein A1C_00165 (189 aa).

Belongs to the UPF0301 (AlgH) family.

This Rickettsia akari (strain Hartford) protein is UPF0301 protein A1C_00165.